We begin with the raw amino-acid sequence, 452 residues long: C4-dicarboxylate transport protein 1 (452 aa).

The next 9 membrane-spanning stretches (helical) occupy residues 18 to 38 (FQVV…PSVG), 51 to 71 (LIKM…IAGM), 83 to 103 (LALL…LLLV), 151 to 171 (AFAK…GFAL), 191 to 211 (VLFT…FGAM), 229 to 249 (LMGA…GAIA), 304 to 324 (GYSF…VFIA), 337 to 357 (ITLL…TGSG), and 359 to 379 (IVLA…LALI). Residues 426 to 452 (WEEAQEPERVLDKKTEHMPVSAMSDAG) are disordered. Residues 431–442 (EPERVLDKKTEH) are compositionally biased toward basic and acidic residues.

Belongs to the dicarboxylate/amino acid:cation symporter (DAACS) (TC 2.A.23) family.

The protein resides in the cell inner membrane. Its function is as follows. Responsible for the transport of dicarboxylates such as succinate, fumarate, and malate from the periplasm across the membrane. The polypeptide is C4-dicarboxylate transport protein 1 (Polaromonas naphthalenivorans (strain CJ2)).